The sequence spans 357 residues: Glutamyl endopeptidase (357 aa).

The first 29 residues, 1–29 (MKGKFLKVSSLFVATLTTATLVSSPAANA), serve as a signal peptide directing secretion. The propeptide occupies 30-68 (LSSKAMDNHPQQTQTDKQQTPKIQKGGNLKPLEQRERAN). The disordered stretch occupies residues 33 to 58 (KAMDNHPQQTQTDKQQTPKIQKGGNL). The segment covering 40-54 (QQTQTDKQQTPKIQK) has biased composition (low complexity). Residues histidine 119, aspartate 161, and serine 237 each act as charge relay system in the active site. The segment at 282–357 (NFANDDHPNN…NNNSDNPDAA (76 aa)) is disordered. 18 repeat units span residues 289 to 291 (PNN), 292 to 294 (PDN), 295 to 297 (PDN), 298 to 300 (PNN), 301 to 303 (PDN), 304 to 306 (PNN), 307 to 309 (PDN), 310 to 312 (PNN), 313 to 315 (PDN), 316 to 318 (PDN), 319 to 321 (PNN), 322 to 324 (PDN), 325 to 327 (PNN), 328 to 330 (PDN), 331 to 333 (PNN), 337 to 339 (PNN), 340 to 342 (PNN), and 343 to 345 (PDN). Residues 289–345 (PNNPDNPDNPNNPDNPNNPDNPNNPDNPDNPNNPDNPNNPDNPNNPDQPNNPNNPDN) form an 18 X 3 AA repeats of P-[DN]-N region. Residues 291–357 (NPDNPDNPNN…NNNSDNPDAA (67 aa)) show a composition bias toward low complexity.

It belongs to the peptidase S1B family. In terms of processing, proteolytically cleaved by aureolysin (aur). This cleavage leads to the activation of SspA.

The protein resides in the secreted. It catalyses the reaction Preferential cleavage: Glu-|-Xaa, Asp-|-Xaa.. In terms of biological role, preferentially cleaves peptide bonds on the carboxyl-terminal side of aspartate and glutamate. Along with other extracellular proteases it is involved in colonization and infection of human tissues. Required for proteolytic maturation of thiol protease SspB and inactivation of SspC, an inhibitor of SspB. It is the most important protease for degradation of fibronectin-binding protein (FnBP) and surface protein A, which are involved in adherence to host cells. May also protect bacteria against host defense mechanism by cleaving the immunoglobulin classes IgG, IgA and IgM. May be involved in the stability of secreted lipases. This chain is Glutamyl endopeptidase (sspA), found in Staphylococcus aureus (strain MRSA252).